Reading from the N-terminus, the 488-residue chain is MARALMFQGTGSDVGKSLLVAGLARAFTLRGLKVRPFKPQNMSNNAAVTADGGEIGRAQALQARAARVPLSVHMNPVLLKPQGETGAQVVVQGRVHGTAKAAAYQGMKPSLLPFVLDSFDRLKAEADLVLVEGAGSASEVNLRTGDIANMGFARAADVPVVVIGDIDRGGVIASLVGTKAVIDAADAALIKGFVVNRFRGDPSLFATGMELIARQTGWAALGLVPHFSEAIRLPAEDALALSAPPAPKPRARTRICVPILPHVSNFDDLDPLDAEPSVEVRRIRPHETLPVDTDLVLLIGSKATIADLAALKAEGLHHDILAFARRGGHVMGLCGGYQMLGETIADPDGIEGEAKIARGLGLLKVHTVLSPEKRLVEVAGVALDPAVAAPFSGYEMHMGVTAGADAEQPFAVLSDGRQDGARSASGRVSGTYVHGLFASDAFRSGLLGALGGAPSQAAYEQGVEETLDRLAAHLAAHLDLDLLFSLAR.

Positions 252-442 (RTRICVPILP…VHGLFASDAF (191 aa)) constitute a GATase cobBQ-type domain. Catalysis depends on Cys334, which acts as the Nucleophile. His434 is an active-site residue.

Belongs to the CobB/CobQ family. CobQ subfamily.

Its pathway is cofactor biosynthesis; adenosylcobalamin biosynthesis. Functionally, catalyzes amidations at positions B, D, E, and G on adenosylcobyrinic A,C-diamide. NH(2) groups are provided by glutamine, and one molecule of ATP is hydrogenolyzed for each amidation. In Xanthobacter autotrophicus (strain ATCC BAA-1158 / Py2), this protein is Cobyric acid synthase.